The following is a 302-amino-acid chain: Glutamate/aspartate import solute-binding protein (302 aa).

An N-terminal signal peptide occupies residues 1–22; the sequence is MQLRKLTTAMLVMGLSAGLAHA.

The protein belongs to the bacterial solute-binding protein 3 family. In terms of assembly, the complex is composed of two ATP-binding proteins (GltL), two transmembrane proteins (GltJ and GltK) and a solute-binding protein (GltI).

The protein resides in the periplasm. In terms of biological role, part of the ABC transporter complex GltIJKL involved in glutamate and aspartate uptake. Binds to both glutamate and aspartate. This is Glutamate/aspartate import solute-binding protein (gltI) from Salmonella typhimurium (strain LT2 / SGSC1412 / ATCC 700720).